The chain runs to 457 residues: Chromosomal replication initiator protein DnaA (457 aa).

Residues 1 to 81 (MERDLSQLWQ…NNTDLVIKVQ (81 aa)) form a domain I, interacts with DnaA modulators region. The segment at 81–119 (QEGSKPAARKVVAQQEIANTPVQHSAPMPENEPQAAFRS) is domain II. Residues 120-337 (NLNQHHLFEN…GALNRVHANA (218 aa)) form a domain III, AAA+ region region. ATP contacts are provided by Gly-165, Gly-167, Lys-168, and Thr-169. Residues 338 to 457 (DFTGKAITID…WSNLIRTLSA (120 aa)) are domain IV, binds dsDNA.

This sequence belongs to the DnaA family. In terms of assembly, oligomerizes as a right-handed, spiral filament on DNA at oriC.

Its subcellular location is the cytoplasm. Its function is as follows. Plays an essential role in the initiation and regulation of chromosomal replication. ATP-DnaA binds to the origin of replication (oriC) to initiate formation of the DNA replication initiation complex once per cell cycle. Binds the DnaA box (a 9 base pair repeat at the origin) and separates the double-stranded (ds)DNA. Forms a right-handed helical filament on oriC DNA; dsDNA binds to the exterior of the filament while single-stranded (ss)DNA is stabiized in the filament's interior. The ATP-DnaA-oriC complex binds and stabilizes one strand of the AT-rich DNA unwinding element (DUE), permitting loading of DNA polymerase. After initiation quickly degrades to an ADP-DnaA complex that is not apt for DNA replication. Binds acidic phospholipids. The chain is Chromosomal replication initiator protein DnaA from Mannheimia succiniciproducens (strain KCTC 0769BP / MBEL55E).